We begin with the raw amino-acid sequence, 183 residues long: Glutathione-regulated potassium-efflux system ancillary protein KefG (183 aa).

The protein belongs to the NAD(P)H dehydrogenase (quinone) family. KefG subfamily. In terms of assembly, interacts with KefB.

It is found in the cell inner membrane. The enzyme catalyses a quinone + NADH + H(+) = a quinol + NAD(+). The catalysed reaction is a quinone + NADPH + H(+) = a quinol + NADP(+). Functionally, regulatory subunit of a potassium efflux system that confers protection against electrophiles. Required for full activity of KefB. The sequence is that of Glutathione-regulated potassium-efflux system ancillary protein KefG from Salmonella enteritidis PT4 (strain P125109).